A 190-amino-acid polypeptide reads, in one-letter code: Crossover junction endodeoxyribonuclease RuvC (190 aa).

Catalysis depends on residues aspartate 8, glutamate 67, and aspartate 139. Mg(2+)-binding residues include aspartate 8, glutamate 67, and aspartate 139.

The protein belongs to the RuvC family. In terms of assembly, homodimer which binds Holliday junction (HJ) DNA. The HJ becomes 2-fold symmetrical on binding to RuvC with unstacked arms; it has a different conformation from HJ DNA in complex with RuvA. In the full resolvosome a probable DNA-RuvA(4)-RuvB(12)-RuvC(2) complex forms which resolves the HJ. Mg(2+) serves as cofactor.

It is found in the cytoplasm. It catalyses the reaction Endonucleolytic cleavage at a junction such as a reciprocal single-stranded crossover between two homologous DNA duplexes (Holliday junction).. The RuvA-RuvB-RuvC complex processes Holliday junction (HJ) DNA during genetic recombination and DNA repair. Endonuclease that resolves HJ intermediates. Cleaves cruciform DNA by making single-stranded nicks across the HJ at symmetrical positions within the homologous arms, yielding a 5'-phosphate and a 3'-hydroxyl group; requires a central core of homology in the junction. The consensus cleavage sequence is 5'-(A/T)TT(C/G)-3'. Cleavage occurs on the 3'-side of the TT dinucleotide at the point of strand exchange. HJ branch migration catalyzed by RuvA-RuvB allows RuvC to scan DNA until it finds its consensus sequence, where it cleaves and resolves the cruciform DNA. The protein is Crossover junction endodeoxyribonuclease RuvC of Actinobacillus succinogenes (strain ATCC 55618 / DSM 22257 / CCUG 43843 / 130Z).